The primary structure comprises 1859 residues: Protein TIC 214 (1859 aa).

Helical transmembrane passes span 18–38, 64–84, 87–107, 124–144, 172–192, and 221–241; these read IINSVVVVGLYYGFLTTFSIG, FITGQLMMFISIYYAPLHLAL, PHTITVLALPYLLFHFFWNNH, LSIQCVFLNNLIFQLFNHFIL, VGWLIGHILFMKWVGLVLFWI, and IFSILLFITCVYYLGRMPAPI. The segment at 247 to 314 is disordered; it reads KETSKTEERG…TEEIRVNGKE (68 aa). The span at 256 to 268 shows a compositional bias: acidic residues; the sequence is GESEEERDVEIET. Positions 273-284 are enriched in basic and acidic residues; sequence KGTKQEQERSTE. Residues 295–306 show a composition bias toward acidic residues; it reads EKEDPDKIDETE.

This sequence belongs to the TIC214 family. In terms of assembly, part of the Tic complex.

The protein resides in the plastid. It is found in the chloroplast inner membrane. Its function is as follows. Involved in protein precursor import into chloroplasts. May be part of an intermediate translocation complex acting as a protein-conducting channel at the inner envelope. This is Protein TIC 214 from Buxus microphylla (Littleleaf boxwood).